A 179-amino-acid polypeptide reads, in one-letter code: Probable inosine/xanthosine triphosphatase (179 aa).

A substrate-binding site is contributed by 13 to 18 (STNPVK). Mg(2+) is bound at residue glutamine 70.

The protein belongs to the YjjX NTPase family. As to quaternary structure, homodimer. Mg(2+) is required as a cofactor. Mn(2+) serves as cofactor.

The enzyme catalyses XTP + H2O = XDP + phosphate + H(+). The catalysed reaction is ITP + H2O = IDP + phosphate + H(+). In terms of biological role, phosphatase that hydrolyzes non-canonical purine nucleotides such as XTP and ITP to their respective diphosphate derivatives. Probably excludes non-canonical purines from DNA/RNA precursor pool, thus preventing their incorporation into DNA/RNA and avoiding chromosomal lesions. This chain is Probable inosine/xanthosine triphosphatase, found in Methanocaldococcus jannaschii (strain ATCC 43067 / DSM 2661 / JAL-1 / JCM 10045 / NBRC 100440) (Methanococcus jannaschii).